Reading from the N-terminus, the 869-residue chain is Histone deacetylase 4 (869 aa).

Disordered regions lie at residues 1-25 (MEEA…PSTS), 128-167 (SSSN…TISQ), and 180-218 (RSKG…QVNV). Over residues 184 to 202 (ESNSQSNLMSNSVTANGNG) the composition is skewed to polar residues. A Phosphoserine modification is found at Ser-251. Residues 460–802 (CTTGLGYDQA…VQALIGESDD (343 aa)) form a histone deacetylase region. The active site involves His-608.

This sequence belongs to the histone deacetylase family. HD type 2 subfamily. In terms of assembly, interacts with mef-2. Post-translationally, phosphorylated by serine/threonine-protein kinase kin-29 at Ser-251; the phosphorylation inhibits repression of transcription by mef-2. May be phosphorylated by either cyclic-AMP dependent or cyclic-GMP dependent protein kinases. In terms of tissue distribution, expressed in body-wall muscle cells, hypodermal seam cells and neuronal cells including sensory amphid neuronal processes, the nerve ring, ventral nerve cords and motor neuronal commissures.

It localises to the nucleus. The catalysed reaction is N(6)-acetyl-L-lysyl-[histone] + H2O = L-lysyl-[histone] + acetate. Responsible for the deacetylation of lysine residues on the N-terminal part of the core histones (H2A, H2B, H3 and H4). Histone deacetylation gives a tag for epigenetic repression and plays an important role in transcriptional regulation, cell cycle progression and developmental events. Histone deacetylases act via the formation of large multiprotein complexes. Involved in transduction of sensory signals, together with egl-4, kin-29 and mef-2; binding to transcription factor mef-2 enables negative modulation of chemoreceptor gene expression in chemosensory neurons. May be involved in muscle development. The chain is Histone deacetylase 4 (hda-4) from Caenorhabditis elegans.